The following is a 501-amino-acid chain: Aspartate--tRNA ligase, cytoplasmic (501 aa).

Position 52 is a phosphothreonine (Thr-52). Residue Lys-74 is modified to N6-acetyllysine. Residue Glu-229 coordinates L-aspartate. The residue at position 249 (Ser-249) is a Phosphoserine. Residues 251–254 form an aspartate region; it reads QLYK. Arg-273 is a binding site for L-aspartate. ATP-binding positions include 273–275 and 281–283; these read RAE and RHL. At Lys-374 the chain carries N6-acetyllysine. Positions 411 to 415 are binding site for the 3'-end of tRNA; it reads KQSNS. Glu-424 provides a ligand contact to ATP. L-aspartate-binding residues include Ser-427 and Arg-431. Residue 472–475 coordinates ATP; sequence GLER. At Thr-500 the chain carries Phosphothreonine; by PKA.

Belongs to the class-II aminoacyl-tRNA synthetase family. Type 2 subfamily. In terms of assembly, homodimer. Part of a multisubunit complex that groups tRNA ligases for Arg (RARS1), Asp (DARS1), Gln (QARS1), Ile (IARS1), Leu (LARS1), Lys (KARS1), Met (MARS1) the bifunctional ligase for Glu and Pro (EPRS1) and the auxiliary subunits AIMP1/p43, AIMP2/p38 and EEF1E1/p18. As to expression, expression in the developing and adult brain shows similar patterns. Highly expressed in the ventricular and subventricular zones, including hippocampal subfields, the midlateral temporal cortex and the frontal polar cortex. The cerebellum, cerebral cortex, hippocampus, and lateral ventricle show preferential neuronal expression. Expression in the peripheral neurons is evident in the colon.

The protein resides in the cytoplasm. It is found in the cytosol. It catalyses the reaction tRNA(Asp) + L-aspartate + ATP = L-aspartyl-tRNA(Asp) + AMP + diphosphate. Functionally, catalyzes the specific attachment of an amino acid to its cognate tRNA in a 2 step reaction: the amino acid (AA) is first activated by ATP to form AA-AMP and then transferred to the acceptor end of the tRNA. This chain is Aspartate--tRNA ligase, cytoplasmic, found in Homo sapiens (Human).